The following is a 362-amino-acid chain: MKASIRVKLETLVERYEEVQHLLGDPDVIGDQNKFRALSREYSQLEEVTQCFQAYEQAQEDLVAAQEMAQEDDEEMREMAQEEIKDAKEAIERLTDELQVLLLPKDPNDERNCFLEIRAGAGGDEAGIFAGNLFRMYSRFAEKKGWRVEVMSSNEAEHGGYKEMIAKVSGEGAYGVLKFESGGHRVQRVPETESQGRVHTSACTVAVMAEIPEADLPEIKAADLKIDTFRASGAGGQHVNTTDSAIRITHLPTGTVVECQDERSQHKNKAKAMSVLAARIIQAEEARRAAAVSDTRRNLLGSGDRSDRIRTYNYPQGRVSDHRINLTVYRLNEVMEGDLGCLIEPVVLEYQADQLAALAEQN.

N5-methylglutamine is present on Gln237.

This sequence belongs to the prokaryotic/mitochondrial release factor family. Post-translationally, methylated by PrmC. Methylation increases the termination efficiency of RF1.

The protein localises to the cytoplasm. Functionally, peptide chain release factor 1 directs the termination of translation in response to the peptide chain termination codons UAG and UAA. This Aliivibrio fischeri (strain ATCC 700601 / ES114) (Vibrio fischeri) protein is Peptide chain release factor 1.